A 252-amino-acid chain; its full sequence is F-box protein At5g39250 (252 aa).

In terms of domain architecture, F-box spans Met1–Gln42.

The protein is F-box protein At5g39250 of Arabidopsis thaliana (Mouse-ear cress).